A 603-amino-acid polypeptide reads, in one-letter code: Probable potassium transport system protein Kup (603 aa).

12 consecutive transmembrane segments (helical) span residues 15 to 35 (GLVF…IFLL), 43 to 63 (VIGV…VEYA), 94 to 114 (AAFI…DGVI), 136 to 156 (IGQG…FSVQ), 163 to 183 (ITWV…FSGI), 201 to 221 (AISF…EVIL), 244 to 264 (AWRL…AFII), 284 to 304 (IYIP…QAMI), 336 to 356 (IYIG…IFEF), 367 to 387 (GLAV…IFYL), 391 to 411 (MFRS…LLSN), and 415 to 435 (IPHG…LIII).

The protein belongs to the HAK/KUP transporter (TC 2.A.72) family.

It is found in the cell membrane. It carries out the reaction K(+)(in) + H(+)(in) = K(+)(out) + H(+)(out). Transport of potassium into the cell. Likely operates as a K(+):H(+) symporter. This chain is Probable potassium transport system protein Kup, found in Methanosarcina acetivorans (strain ATCC 35395 / DSM 2834 / JCM 12185 / C2A).